We begin with the raw amino-acid sequence, 220 residues long: Cytidylate kinase (220 aa).

9–17 (GPAASGKST) contacts ATP.

It belongs to the cytidylate kinase family. Type 1 subfamily.

The protein resides in the cytoplasm. It catalyses the reaction CMP + ATP = CDP + ADP. The enzyme catalyses dCMP + ATP = dCDP + ADP. This Thermotoga neapolitana (strain ATCC 49049 / DSM 4359 / NBRC 107923 / NS-E) protein is Cytidylate kinase.